A 217-amino-acid polypeptide reads, in one-letter code: Ribonuclease HII (217 aa).

The RNase H type-2 domain maps to 16–217 (YCIAGVDEVG…VARVLGTYHD (202 aa)). A divalent metal cation is bound by residues D22, E23, and D114.

The protein belongs to the RNase HII family. It depends on Mn(2+) as a cofactor. The cofactor is Mg(2+).

It localises to the cytoplasm. It catalyses the reaction Endonucleolytic cleavage to 5'-phosphomonoester.. Functionally, endonuclease that specifically degrades the RNA of RNA-DNA hybrids. The polypeptide is Ribonuclease HII (Colwellia psychrerythraea (strain 34H / ATCC BAA-681) (Vibrio psychroerythus)).